A 501-amino-acid chain; its full sequence is Cytochrome P450 71B25 (501 aa).

A helical transmembrane segment spans residues 1-21 (MAILQSFLLLLSLPFLFTLIY). Residue cysteine 445 participates in heme binding.

The protein belongs to the cytochrome P450 family. Heme is required as a cofactor.

The protein localises to the membrane. In Arabidopsis thaliana (Mouse-ear cress), this protein is Cytochrome P450 71B25 (CYP71B25).